The chain runs to 432 residues: MFVDQVKIYVKGGDGGNGMVAFRREKYVPKGGPAGGDGGKGGDVVFVVDEGLRTLMDFRYQRHFKAPRGENGMSKNQHGKNAEDLIVKVPPGTVVIDADTNEVLADLTEAGQRFVVAKGGRGGRGNTRFATASNPAPEIAENGEPGEERNIILELKLLADVGLVGFPSVGKSTLLSVVSAARPKIAEYHFTTLVPNLGVVETEDGRSFVMADLPGLIEGAHQGVGLGHQFLRHIERTRVIVHVIDMAAVEGRDPYNDYLVINEELKQYNLRLTERPQIVAANKMDMPNAEENLRRFKEKVGDAVPVFPISAATRQGVRELLFAIADLLETTPEFPLHEREDPAVQRVVYKYEKEEPPFTITRASDGAFILAGDKIEKLFKMTDFSREESVRRFARQLKAMGVDDALRERGAKDGDTIRLLDYEFEFVDDWDE.

The Obg domain occupies Met1–Leu158. One can recognise an OBG-type G domain in the interval Ala159–Glu329. GTP is bound by residues Gly165–Ser172, Phe190–Val194, Asp212–Gly215, Asn282–Asp285, and Ser310–Ala312. Mg(2+) contacts are provided by Ser172 and Thr192. An OCT domain is found at Lys350 to Asp428.

The protein belongs to the TRAFAC class OBG-HflX-like GTPase superfamily. OBG GTPase family. As to quaternary structure, monomer. Mg(2+) serves as cofactor.

It is found in the cytoplasm. Functionally, an essential GTPase which binds GTP, GDP and possibly (p)ppGpp with moderate affinity, with high nucleotide exchange rates and a fairly low GTP hydrolysis rate. Plays a role in control of the cell cycle, stress response, ribosome biogenesis and in those bacteria that undergo differentiation, in morphogenesis control. This is GTPase Obg from Geobacillus kaustophilus (strain HTA426).